The chain runs to 117 residues: Ribosome-binding factor A (117 aa).

This sequence belongs to the RbfA family. Monomer. Binds 30S ribosomal subunits, but not 50S ribosomal subunits or 70S ribosomes.

It is found in the cytoplasm. In terms of biological role, one of several proteins that assist in the late maturation steps of the functional core of the 30S ribosomal subunit. Associates with free 30S ribosomal subunits (but not with 30S subunits that are part of 70S ribosomes or polysomes). Required for efficient processing of 16S rRNA. May interact with the 5'-terminal helix region of 16S rRNA. In Lactiplantibacillus plantarum (strain ATCC BAA-793 / NCIMB 8826 / WCFS1) (Lactobacillus plantarum), this protein is Ribosome-binding factor A.